The following is a 300-amino-acid chain: 4-hydroxy-tetrahydrodipicolinate synthase (300 aa).

Thr-56 contributes to the pyruvate binding site. Catalysis depends on Tyr-145, which acts as the Proton donor/acceptor. Lys-173 functions as the Schiff-base intermediate with substrate in the catalytic mechanism. A pyruvate-binding site is contributed by Val-215.

This sequence belongs to the DapA family. Homotetramer; dimer of dimers.

The protein localises to the cytoplasm. The catalysed reaction is L-aspartate 4-semialdehyde + pyruvate = (2S,4S)-4-hydroxy-2,3,4,5-tetrahydrodipicolinate + H2O + H(+). The protein operates within amino-acid biosynthesis; L-lysine biosynthesis via DAP pathway; (S)-tetrahydrodipicolinate from L-aspartate: step 3/4. In terms of biological role, catalyzes the condensation of (S)-aspartate-beta-semialdehyde [(S)-ASA] and pyruvate to 4-hydroxy-tetrahydrodipicolinate (HTPA). This is 4-hydroxy-tetrahydrodipicolinate synthase from Prochlorococcus marinus (strain AS9601).